A 210-amino-acid chain; its full sequence is MKPTSVIIMDTHPIIRMSIEVLLQKNSELQIVLKTDDYRITIDYLRTRPVDLIIMDIDLPGTDGFTFLKRIKQIQSTVKVLFLSSKSECFYAGRAIQAGANGFVSKCNDQNDIFHAVQMILSGYTFFPSETLNYIKSNKCSTNSSTVTVLSNREVTILRYLVSGLSNKEIADKLLLSNKTVSAHKSNIYGKLGLHSIVELIDYAKLYELI.

The region spanning 5 to 121 (SVIIMDTHPI…DIFHAVQMIL (117 aa)) is the Response regulatory domain. Asp-56 carries the 4-aspartylphosphate modification. Positions 143-208 (NSSTVTVLSN…ELIDYAKLYE (66 aa)) constitute an HTH luxR-type domain. A DNA-binding region (H-T-H motif) is located at residues 167–186 (NKEIADKLLLSNKTVSAHKS).

It is found in the cytoplasm. The chain is Fimbriae Z protein (fimZ) from Escherichia coli O157:H7.